Reading from the N-terminus, the 296-residue chain is Small ribosomal subunit protein uS2 (296 aa).

Positions 246–272 (QAKDGSVVDSGKGKSIAAHKGGGKASK) are disordered.

It belongs to the universal ribosomal protein uS2 family.

In Anaplasma phagocytophilum (strain HZ), this protein is Small ribosomal subunit protein uS2.